A 204-amino-acid polypeptide reads, in one-letter code: N-(5'-phosphoribosyl)anthranilate isomerase (204 aa).

Belongs to the TrpF family.

The catalysed reaction is N-(5-phospho-beta-D-ribosyl)anthranilate = 1-(2-carboxyphenylamino)-1-deoxy-D-ribulose 5-phosphate. The protein operates within amino-acid biosynthesis; L-tryptophan biosynthesis; L-tryptophan from chorismate: step 3/5. This is N-(5'-phosphoribosyl)anthranilate isomerase from Desulforudis audaxviator (strain MP104C).